Here is a 598-residue protein sequence, read N- to C-terminus: Transcription factor COE3 (598 aa).

The interval Met1–Gly23 is disordered. Residues Arg63–Asn66 are interaction with DNA. A C5-type zinc finger spans residues Cys151 to Cys170. Interaction with DNA stretches follow at residues Asn197–Asn204 and Asn236–Lys239. In terms of domain architecture, IPT/TIG spans Pro264–Thr347. The interval Thr452 to Asn483 is disordered.

Belongs to the COE family. As to quaternary structure, forms either a homodimer or a heterodimer with a related family member.

It localises to the nucleus. Its function is as follows. Acts as a transcriptional activator. The polypeptide is Transcription factor COE3 (coe3) (Xenopus laevis (African clawed frog)).